A 994-amino-acid polypeptide reads, in one-letter code: Valine--tRNA ligase (994 aa).

The 'HIGH' region signature appears at 43–53 (PNVTGTLHMGH). The disordered stretch occupies residues 332-356 (IASGATSDTTDTPSDSDASNASNQH). Residues 333 to 353 (ASGATSDTTDTPSDSDASNAS) are compositionally biased toward low complexity. A 'KMSKS' region motif is present at residues 585 to 589 (KMSKS). K588 provides a ligand contact to ATP. Residues 691-713 (TAHSPAQHQAGQDGQDVPRTPQP) are disordered. The stretch at 928–994 (LIDVDAERAR…NGLRERRTTL (67 aa)) forms a coiled coil.

This sequence belongs to the class-I aminoacyl-tRNA synthetase family. ValS type 1 subfamily. Monomer.

It localises to the cytoplasm. It carries out the reaction tRNA(Val) + L-valine + ATP = L-valyl-tRNA(Val) + AMP + diphosphate. Its function is as follows. Catalyzes the attachment of valine to tRNA(Val). As ValRS can inadvertently accommodate and process structurally similar amino acids such as threonine, to avoid such errors, it has a 'posttransfer' editing activity that hydrolyzes mischarged Thr-tRNA(Val) in a tRNA-dependent manner. The polypeptide is Valine--tRNA ligase (Xylella fastidiosa (strain M23)).